Consider the following 332-residue polypeptide: MALPEFSMRQLLEAGVHFGHQSHRWNPKMADYIFGARNNIHIIDLAQTVPLLHRALQAVSDTVAKGGRILFVGTKRQAQDGVADAAKRSAQYFVNSRWLGGTLTNWKTISGSIKRLRHLDEVLSSGDANAYTKKERLTLQRERDKLDRSLGGIKDMGGLPDLIFVIDTNKEDIAIQEAQRLNIPVAAIVDTNCDPKGITYLVPGNDDAGRAISLYCDLIARAAIDGISRAQGDSGIDIGASVQPVQEELPAAAQPAGFQGLAGPRGVADDLKKLTGVSGEIEKKFNDLGIFHYWQLAEFDHETAHKIGEEVGLPSRADGWVAQAKALTAEAE.

The protein belongs to the universal ribosomal protein uS2 family.

The polypeptide is Small ribosomal subunit protein uS2 (Nitrobacter hamburgensis (strain DSM 10229 / NCIMB 13809 / X14)).